We begin with the raw amino-acid sequence, 372 residues long: Probable O-methyltransferase 2 (372 aa).

Gly216, Asp259, and Lys273 together coordinate S-adenosyl-L-methionine. The active-site Proton acceptor is the His277.

Belongs to the class I-like SAM-binding methyltransferase superfamily. Cation-independent O-methyltransferase family. COMT subfamily. Homodimer. As to expression, expressed predominantly in root hairs.

O-methyltransferase of unknown substrate specificity. Not active on resorcinol, orcinol, guaiacol, eugenol, ferulic acid, p-coumaric acid, catechol, caffeic acid or monomethyl ethers of resorcinol or orcinol. The sequence is that of Probable O-methyltransferase 2 (OMT2) from Sorghum bicolor (Sorghum).